Consider the following 330-residue polypeptide: T-cell surface glycoprotein CD1b4 (330 aa).

The first 15 residues, 1–15 (MLLLALAFFFPAGDT), serve as a signal peptide directing secretion. Topologically, residues 16–299 (QNVLPGKISF…LYWGHSISIG (284 aa)) are extracellular. 3 N-linked (GlcNAc...) asparagine glycosylation sites follow: Asn35, Asn72, and Asn143. Disulfide bonds link Cys117–Cys181 and Cys221–Cys276. The 111-residue stretch at 182–292 (PRYLMSVIEA…LEGQDIILYW (111 aa)) folds into the Ig-like domain. The helical transmembrane segment at 300–320 (WIILAVLVPCLIVLVLFILWF) threads the bilayer. Residues 321 to 330 (YRRWSYEDIF) are Cytoplasmic-facing. The Internalization signal signature appears at 326–329 (YEDI).

In terms of assembly, heterodimer with B2M (beta-2-microglobulin). Interacts with saposin C.

It is found in the cell membrane. Its subcellular location is the endosome membrane. The protein localises to the lysosome membrane. Functionally, antigen-presenting protein that binds self and non-self lipid and glycolipid antigens and presents them to T-cell receptors on natural killer T-cells. The protein is T-cell surface glycoprotein CD1b4 (CD1B4) of Cavia porcellus (Guinea pig).